A 185-amino-acid polypeptide reads, in one-letter code: Threonylcarbamoyl-AMP synthase (185 aa).

Residues 3-185 (EQAPAEVKQV…IDAISGKILR (183 aa)) form the YrdC-like domain.

It belongs to the SUA5 family. TsaC subfamily.

It localises to the cytoplasm. The enzyme catalyses L-threonine + hydrogencarbonate + ATP = L-threonylcarbamoyladenylate + diphosphate + H2O. Required for the formation of a threonylcarbamoyl group on adenosine at position 37 (t(6)A37) in tRNAs that read codons beginning with adenine. Catalyzes the conversion of L-threonine, HCO(3)(-)/CO(2) and ATP to give threonylcarbamoyl-AMP (TC-AMP) as the acyladenylate intermediate, with the release of diphosphate. This chain is Threonylcarbamoyl-AMP synthase, found in Shewanella woodyi (strain ATCC 51908 / MS32).